The chain runs to 246 residues: Large ribosomal subunit protein uL3 (246 aa).

Q151 carries the N5-methylglutamine modification.

This sequence belongs to the universal ribosomal protein uL3 family. In terms of assembly, part of the 50S ribosomal subunit. Forms a cluster with proteins L14 and L19. In terms of processing, methylated by PrmB.

In terms of biological role, one of the primary rRNA binding proteins, it binds directly near the 3'-end of the 23S rRNA, where it nucleates assembly of the 50S subunit. The chain is Large ribosomal subunit protein uL3 from Bartonella henselae (strain ATCC 49882 / DSM 28221 / CCUG 30454 / Houston 1) (Rochalimaea henselae).